Here is an 82-residue protein sequence, read N- to C-terminus: Small ribosomal subunit protein bS16 (82 aa).

Belongs to the bacterial ribosomal protein bS16 family.

In Shewanella sp. (strain MR-4), this protein is Small ribosomal subunit protein bS16.